The primary structure comprises 206 residues: Small ribosomal subunit protein uS4 (206 aa).

The S4 RNA-binding domain maps to 96-156 (GRLDNVVYRM…EKAKKQSRVK (61 aa)).

It belongs to the universal ribosomal protein uS4 family. In terms of assembly, part of the 30S ribosomal subunit. Contacts protein S5. The interaction surface between S4 and S5 is involved in control of translational fidelity.

One of the primary rRNA binding proteins, it binds directly to 16S rRNA where it nucleates assembly of the body of the 30S subunit. Functionally, with S5 and S12 plays an important role in translational accuracy. This Salmonella agona (strain SL483) protein is Small ribosomal subunit protein uS4.